A 1181-amino-acid chain; its full sequence is WD repeat-containing protein 35 (1181 aa).

6 WD repeats span residues 4 to 43 (YLSK…VLKL), 61 to 100 (LSMN…VWML), 105 to 143 (WIEE…IVGS), 147 to 185 (NRIW…IYDN), 193 to 241 (MKLS…IMRH), and 246 to 288 (NPVL…IVQF).

In terms of assembly, component of the IFT complex A (IFT-A) complex. IFT-A complex is divided into a core subcomplex composed of IFT122:IFT140:WDR19 which is associated with TULP3 and a peripheral subcomplex composed of IFT43:WDR35:TTC21B. Interacts directy with IFT122, ITF43 and TTC21B. Interacts with IFT43. Interacts with CFAP61.

It localises to the cytoplasm. Its subcellular location is the cytoskeleton. It is found in the microtubule organizing center. The protein resides in the centrosome. The protein localises to the cilium axoneme. It localises to the cilium basal body. As a component of the IFT complex A (IFT-A), a complex required for retrograde ciliary transport and entry into cilia of G protein-coupled receptors (GPCRs), it is involved in ciliogenesis and ciliary protein trafficking. May promote CASP3 activation and TNF-stimulated apoptosis. The chain is WD repeat-containing protein 35 from Homo sapiens (Human).